We begin with the raw amino-acid sequence, 636 residues long: Fructose-1,6-bisphosphatase class 3 (636 aa).

It belongs to the FBPase class 3 family. Requires Mn(2+) as cofactor.

It carries out the reaction beta-D-fructose 1,6-bisphosphate + H2O = beta-D-fructose 6-phosphate + phosphate. The protein operates within carbohydrate biosynthesis; gluconeogenesis. In Streptococcus gordonii (strain Challis / ATCC 35105 / BCRC 15272 / CH1 / DL1 / V288), this protein is Fructose-1,6-bisphosphatase class 3.